We begin with the raw amino-acid sequence, 548 residues long: Eukaryotic translation initiation factor 3 subunit D (548 aa).

N6-acetyllysine is present on Lys53. Position 161 is a phosphoserine (Ser161). The tract at residues 285–299 (DFDLLTVSETANEPP) is RNA gate. Residues 523-548 (PDGTFSSDEDDEEEEEEEEEEEEEEA) form a disordered region. A phosphoserine mark is found at Ser528 and Ser529. Acidic residues predominate over residues 529 to 548 (SDEDDEEEEEEEEEEEEEEA).

Belongs to the eIF-3 subunit D family. Component of the eukaryotic translation initiation factor 3 (eIF-3) complex, which is composed of 13 subunits: EIF3A, EIF3B, EIF3C, EIF3D, EIF3E, EIF3F, EIF3G, EIF3H, EIF3I, EIF3J, EIF3K, EIF3L and EIF3M. The eIF-3 complex appears to include 3 stable modules: module A is composed of EIF3A, EIF3B, EIF3G and EIF3I; module B is composed of EIF3F, EIF3H, and EIF3M; and module C is composed of EIF3C, EIF3D, EIF3E, EIF3K and EIF3L. EIF3C of module C binds EIF3B of module A and EIF3H of module B, thereby linking the three modules. EIF3J is a labile subunit that binds to the eIF-3 complex via EIF3B. The eIF-3 complex interacts with RPS6KB1 under conditions of nutrient depletion. Mitogenic stimulation leads to binding and activation of a complex composed of MTOR and RPTOR, leading to phosphorylation and release of RPS6KB1 and binding of EIF4B to eIF-3.

The protein localises to the cytoplasm. Its function is as follows. mRNA cap-binding component of the eukaryotic translation initiation factor 3 (eIF-3) complex, a complex required for several steps in the initiation of protein synthesis of a specialized repertoire of mRNAs. The eIF-3 complex associates with the 40S ribosome and facilitates the recruitment of eIF-1, eIF-1A, eIF-2:GTP:methionyl-tRNAi and eIF-5 to form the 43S pre-initiation complex (43S PIC). The eIF-3 complex stimulates mRNA recruitment to the 43S PIC and scanning of the mRNA for AUG recognition. The eIF-3 complex is also required for disassembly and recycling of post-termination ribosomal complexes and subsequently prevents premature joining of the 40S and 60S ribosomal subunits prior to initiation. The eIF-3 complex specifically targets and initiates translation of a subset of mRNAs involved in cell proliferation, including cell cycling, differentiation and apoptosis, and uses different modes of RNA stem-loop binding to exert either translational activation or repression. In the eIF-3 complex, EIF3D specifically recognizes and binds the 7-methylguanosine cap of a subset of mRNAs. This is Eukaryotic translation initiation factor 3 subunit D from Bos taurus (Bovine).